The sequence spans 221 residues: Iron-sulfur cluster repair protein YtfE (221 aa).

This sequence belongs to the RIC family. YtfE subfamily. In terms of assembly, homodimer.

It is found in the cytoplasm. Its function is as follows. Di-iron-containing protein involved in the repair of iron-sulfur clusters damaged by oxidative and nitrosative stress conditions. The chain is Iron-sulfur cluster repair protein YtfE from Yersinia pseudotuberculosis serotype O:1b (strain IP 31758).